We begin with the raw amino-acid sequence, 296 residues long: Probable 6-phosphogluconolactonase 1 (296 aa).

Belongs to the glucosamine/galactosamine-6-phosphate isomerase family. 6-phosphogluconolactonase subfamily.

The catalysed reaction is 6-phospho-D-glucono-1,5-lactone + H2O = 6-phospho-D-gluconate + H(+). It functions in the pathway carbohydrate degradation; pentose phosphate pathway; D-ribulose 5-phosphate from D-glucose 6-phosphate (oxidative stage): step 2/3. Hydrolysis of 6-phosphogluconolactone to 6-phosphogluconate. The chain is Probable 6-phosphogluconolactonase 1 from Oryza sativa subsp. japonica (Rice).